A 335-amino-acid polypeptide reads, in one-letter code: HTH-type transcriptional regulator RipA (335 aa).

An HTH araC/xylS-type domain is found at 119 to 216 (RKVAQKLIAY…GDTPSSFTSP (98 aa)). DNA-binding regions (H-T-H motif) lie at residues 136 to 157 (LEFAQLHNISSRTLQRQFVAST) and 183 to 206 (IGQVSQMVGFSATSSLTRAFKRHT).

In terms of biological role, under iron limitation, represses the acn (aconitase), catA (catechol 1,2 dioxygenase), leuCD (isopropylmalate dehydratase), narKGHJI (nitrite/nitrate transporter and nitrate reductase), sdhCAB (succinate dehydrogenase), pta (phosphotransacetylase) and katA (catalase) genes. The chain is HTH-type transcriptional regulator RipA from Corynebacterium diphtheriae (strain ATCC 700971 / NCTC 13129 / Biotype gravis).